The primary structure comprises 862 residues: Transcription initiation factor TFIID subunit 4B (862 aa).

Residues 100-241 form a sufficient for interaction with ZNF628 region; it reads NTTTIQFPAN…TPSNEPNLKA (142 aa). Polar residues predominate over residues 219-237; sequence VTTLKPSSLGASSTPSNEP. The disordered stretch occupies residues 219–239; the sequence is VTTLKPSSLGASSTPSNEPNL. In terms of domain architecture, TAFH spans 256 to 353; sequence LENVKKCKNF…CVQQTSSDMV (98 aa). The required for interaction with P65/RELA stretch occupies residues 511 to 533; the sequence is PGPVLSQPAGIPQAVQVKQLVVQ. The Nuclear export signal motif lies at 516-556; the sequence is SQPAGIPQAVQVKQLVVQQPSGGNEKQVTTISHSSTLTIQK. At S595 the chain carries Phosphoserine. One can recognise a Histone-fold domain in the interval 653-702; it reads PFLFIGALQKRILDIGKKHDITELNSDAVNLISQATQERLRGLLEKLTAI. Positions 722-787 form a coiled coil; that stretch reads TRSQLKFLEK…LAQIQHRDAN (66 aa). Residues 830-862 are required for interaction with TAF12; it reads PRITRICLRDLIFCMEQEREMKYSRALYLALLK.

This sequence belongs to the TAF4 family. TFIID is composed of TATA binding protein (TBP) and a number of TBP-associated factors (TAFs). Heterodimerizes with TAF12/TFII20 via the C-terminal H2A-like histone-fold domain. This heterodimer forms a histone-like octamer with the TAF6/TAFII70-TAF9/TAFII31 heterodimer. Interacts with P65/RELA homodimers and P65/RELA-REL heterodimers. Interaction with POU2AF1, via its C-terminal activation domain, is required for octamer-dependent transcription. Interacts with ZNF628. In terms of processing, under stimulation by forskolin, Isoform 1 is phosphorylated by protein kinase A (PKA). In terms of tissue distribution, preferentially expressed in ovarian granulosa cells (at protein level). Highly expressed in B-cells.

Its subcellular location is the nucleus. The protein localises to the cytoplasm. Cell type-specific subunit of the general transcription factor TFIID that may function as a gene-selective coactivator in certain cells. TFIID is a multimeric protein complex that plays a central role in mediating promoter responses to various activators and repressors. TAF4B is a transcriptional coactivator of the p65/RELA NF-kappa-B subunit. Involved in the activation of a subset of antiapoptotic genes including TNFAIP3. May be involved in regulating folliculogenesis. Through interaction with OCBA/POU2AF1, acts as a coactivator of B-cell-specific transcription. Plays a role in spermiogenesis and oogenesis. This Homo sapiens (Human) protein is Transcription initiation factor TFIID subunit 4B (TAF4B).